We begin with the raw amino-acid sequence, 786 residues long: MRRSLAPSQRLGVRIKSKDAFTPPLQKKNKRVCQIELQKRQSALRDATNTVELPLPIRFTANSDYEQAIAKVLARKFKVPIANYVPDYGGNRTLGVRRSIVRRALHDPQACNALVLYTPPAYTEHERMSLDPSKLQVHVVVDPILSNVLRPHQREGVRFMYECVEGKRGNFNGCIMADEMGLGKTLQCVTLTWTLLRQSPDCKPTISKAIVVSPSSLVKNWEKEFTKWLHGRMHCLAMEGGSKEDTTRTLEQFAMNTATRCGTPVLLISYETFRLYSHILCKTEVGMVICDEGHRLKNSDNLTYQALMGLKTKRRVLLSGTPIQNDLTEYFSLVNFVNPEMLGTGSDFKRNFENAILRGQNADSTDAERERALEKTQELVGLVNQCIIRRTNQILTKYLPVKFEMVVCAKLTAVQLQLYTNFLKSDQVRRSLADCTDKTTLTALADITTLKKLCNHPDLIYEKIAAREKGFENSQNVLPPNYKPKDVNPELSGKFMLLDFMLAAIRANSDDKVVLISNYTQTLDLFEQLARKRKYSYVRLDGTMTIKKRSKVVDRFNDPATDCFLFMLSSKAGGCGLNLIGANRLFMFDPDWNPANDEQAMARVWRDGQKKPCYIYRLVASGSIEEKILQRQTHKKSLSSSIIDNNDSAEKHFTRDDLKDLFRFEANVLSDTHNKLKCKRCFQDVQRQPPPENSDCTSHLSQWFHCSNNRGLPDSILSQAWMASKCVSFVFHHRSQGDAKQPTCITEDNHSEQPQLNSKRNANSVLENDDDEDFDPNSSDEKFLGF.

The tract at residues 2 to 9 (RRSLAPSQ) is required for chromatin remodeling, strand pairing activities and coupling of ATPase activity. Residue Thr22 is modified to Phosphothreonine. A Helicase ATP-binding domain is found at 165 to 340 (EGKRGNFNGC…FSLVNFVNPE (176 aa)). 178–185 (DEMGLGKT) contacts ATP. Positions 291 to 294 (DEGH) match the DEGH box motif. The Helicase C-terminal domain maps to 497–654 (LLDFMLAAIR…NNDSAEKHFT (158 aa)). Residues 740 to 786 (KQPTCITEDNHSEQPQLNSKRNANSVLENDDDEDFDPNSSDEKFLGF) are disordered. The segment covering 752–766 (EQPQLNSKRNANSVL) has biased composition (polar residues).

It belongs to the SNF2/RAD54 helicase family. Interacts (via N-terminus) with spn-A/Rad51.

The protein localises to the nucleus. Its function is as follows. Involved in mitotic DNA repair and meiotic recombination. Functions in the recombinational DNA repair pathway. Essential for interhomolog gene conversion (GC), but may have a less important role in intersister GC than spn-A/Rad51. In the presence of DNA, spn-A/Rad51 enhances the ATPase activity of okr/Rad54. This Drosophila virilis (Fruit fly) protein is DNA repair and recombination protein RAD54-like.